The sequence spans 336 residues: MIEADRLVSADSSGFEEAADRAIRPKLLAEYVGQPQVRSQMEIFIQAAKLRGDALDHLLIFGPPGLGKTTLANIVANEMGVNLRTTSGPVLEKAGDLAAMLTNLEPHDVLFIDEIHRLSPVVEEVLYPAMEDYQLDIMIGEGPAARSIKIDLPPFTLIGATTRAGSLTSPLRDRFGIVQRLEFYQIPDLQHIVSRSARHMGLEMSDEGALEVARRSRGTPRIANRLLRRVRDFAEVRHDGTISADIAAQALDMLNVDAEGFDYMDRKLLLAVIDKFFGGPVGLDNLAAAIGEERETIEDVLEPYLIQQGFLQRTPRGRMATVRAWNHFGITPPEMP.

The large ATPase domain (RuvB-L) stretch occupies residues 4-184 (ADRLVSADSS…FGIVQRLEFY (181 aa)). ATP-binding positions include isoleucine 23, arginine 24, glycine 65, lysine 68, threonine 69, threonine 70, 131 to 133 (EDY), arginine 174, tyrosine 184, and arginine 221. Residue threonine 69 participates in Mg(2+) binding. The segment at 185-255 (QIPDLQHIVS…IAAQALDMLN (71 aa)) is small ATPAse domain (RuvB-S). The tract at residues 258-336 (AEGFDYMDRK…HFGITPPEMP (79 aa)) is head domain (RuvB-H). DNA contacts are provided by arginine 294, arginine 313, and arginine 318.

This sequence belongs to the RuvB family. Homohexamer. Forms an RuvA(8)-RuvB(12)-Holliday junction (HJ) complex. HJ DNA is sandwiched between 2 RuvA tetramers; dsDNA enters through RuvA and exits via RuvB. An RuvB hexamer assembles on each DNA strand where it exits the tetramer. Each RuvB hexamer is contacted by two RuvA subunits (via domain III) on 2 adjacent RuvB subunits; this complex drives branch migration. In the full resolvosome a probable DNA-RuvA(4)-RuvB(12)-RuvC(2) complex forms which resolves the HJ.

It is found in the cytoplasm. It carries out the reaction ATP + H2O = ADP + phosphate + H(+). Functionally, the RuvA-RuvB-RuvC complex processes Holliday junction (HJ) DNA during genetic recombination and DNA repair, while the RuvA-RuvB complex plays an important role in the rescue of blocked DNA replication forks via replication fork reversal (RFR). RuvA specifically binds to HJ cruciform DNA, conferring on it an open structure. The RuvB hexamer acts as an ATP-dependent pump, pulling dsDNA into and through the RuvAB complex. RuvB forms 2 homohexamers on either side of HJ DNA bound by 1 or 2 RuvA tetramers; 4 subunits per hexamer contact DNA at a time. Coordinated motions by a converter formed by DNA-disengaged RuvB subunits stimulates ATP hydrolysis and nucleotide exchange. Immobilization of the converter enables RuvB to convert the ATP-contained energy into a lever motion, pulling 2 nucleotides of DNA out of the RuvA tetramer per ATP hydrolyzed, thus driving DNA branch migration. The RuvB motors rotate together with the DNA substrate, which together with the progressing nucleotide cycle form the mechanistic basis for DNA recombination by continuous HJ branch migration. Branch migration allows RuvC to scan DNA until it finds its consensus sequence, where it cleaves and resolves cruciform DNA. The sequence is that of Holliday junction branch migration complex subunit RuvB from Klebsiella pneumoniae subsp. pneumoniae (strain ATCC 700721 / MGH 78578).